A 657-amino-acid chain; its full sequence is MTQLAIGKPAPLGAHYDGQGVNFTLFSAHAERVELCIFDANGQEHRYDLPGHSGDIWHGYLPDARPGLRYGYRVHGPWQPAEGHRFNPAKLLIDPCARQIDGEFKDNPLLHAGHNEPDYRDNAAIAPKCVVVVDHYDWEDDAPPRTPWGSTIIYEAHVKGLTYLHPEIPVEIRGTYKALGHPVMINYLKQLGITALELLPVAQFASEPRLQRMGLSNYWGYNPVAMFALHPAYACSPETALDEFRDAIKALHKAGIEVILDIVLNHSAELDLDGPLFSLRGIDNRSYYWIREDGDYHNWTGCGNTLNLSHPAVVDYASACLRYWVETCHVDGFRFDLAAVMGRTPEFRQDAPLFTAIQNCPVLSQVKLIAEPWDIAPGGYQVGNFPPLFAEWNDHFRDAARRFWLHYDLPLGAFAGRFAASSDVFKRNGRLPSAAINLVTAHDGFTLRDCVCFNHKHNEANGEENRDGTNNNYSNNHGKEGLGGTLDLVERRRDSIHALLTTLLLSQGTPMLLAGDEHGHSQHGNNNAYCQDNQLTWLDWSQASSGLTAFTAALIHLRKRIPALVENRWWEEGDGNVRWLNRYAQPLSTDEWQNGPKQLQILLSDRFLIAINATLEVTEIVLPAGEWHAIPPFAGEDNPVITAVWQGPAHGLCVFQR.

Aspartate 336 functions as the Nucleophile in the catalytic mechanism. Glutamate 371 functions as the Proton donor in the catalytic mechanism. The tract at residues 460–479 (ANGEENRDGTNNNYSNNHGK) is disordered.

Belongs to the glycosyl hydrolase 13 family.

The catalysed reaction is Hydrolysis of (1-&gt;6)-alpha-D-glucosidic linkages to branches with degrees of polymerization of three or four glucose residues in limit dextrin.. It functions in the pathway glycan degradation; glycogen degradation. Its function is as follows. Removes maltotriose and maltotetraose chains that are attached by 1,6-alpha-linkage to the limit dextrin main chain, generating a debranched limit dextrin. The polypeptide is Glycogen debranching enzyme (Escherichia coli O17:K52:H18 (strain UMN026 / ExPEC)).